We begin with the raw amino-acid sequence, 152 residues long: MAHQERTFIAIKPDGVQRGLVGDIVKRFEQKGFRLVAMKFLRASEDLLKEHYIDLKDRPFYPGLVKYMHSGPVVAMVWEGLNVVKTGRMMLGETNPADSKPGTIRGDFCIQVGRNIIHGSDSVKSAEKEISLWFKPEELVDYKSCAFDWIYE.

The segment at 1 to 66 is interaction with AKAP13; sequence MAHQERTFIA…DRPFYPGLVK (66 aa). Lysine 12, phenylalanine 60, arginine 88, threonine 94, arginine 105, and asparagine 115 together coordinate ATP. Histidine 118 acts as the Pros-phosphohistidine intermediate in catalysis.

It belongs to the NDK family. As to quaternary structure, hexamer of two different chains: An and B (A6, A5B, A4B2, A3B3, A2B4, AB5, B6). Interacts with CAPN8. Interacts with AKAP13. Interacts with ITGB1BP1 (via C-terminal domain region). Interacts with BCL2L10. Mg(2+) serves as cofactor. In terms of tissue distribution, ubiquitous.

It is found in the cytoplasm. The protein localises to the cell projection. The protein resides in the lamellipodium. It localises to the ruffle. Its subcellular location is the nucleus. It catalyses the reaction a 2'-deoxyribonucleoside 5'-diphosphate + ATP = a 2'-deoxyribonucleoside 5'-triphosphate + ADP. The catalysed reaction is a ribonucleoside 5'-diphosphate + ATP = a ribonucleoside 5'-triphosphate + ADP. It carries out the reaction ATP + protein L-histidine = ADP + protein N-phospho-L-histidine.. Major role in the synthesis of nucleoside triphosphates other than ATP. The ATP gamma phosphate is transferred to the NDP beta phosphate via a ping-pong mechanism, using a phosphorylated active-site intermediate. Negatively regulates Rho activity by interacting with AKAP13/LBC. Acts as a transcriptional activator of the MYC gene; binds DNA non-specifically. Binds to both single-stranded guanine- and cytosine-rich strands within the nuclease hypersensitive element (NHE) III(1) region of the MYC gene promoter. Does not bind to duplex NHE III(1). Has G-quadruplex (G4) DNA-binding activity, which is independent of its nucleotide-binding and kinase activity. Binds both folded and unfolded G4 with similar low nanomolar affinities. Stabilizes folded G4s regardless of whether they are prefolded or not. Exhibits histidine protein kinase activity. The protein is Nucleoside diphosphate kinase B (NME2) of Canis lupus familiaris (Dog).